A 911-amino-acid polypeptide reads, in one-letter code: Protein argonaute 4B (911 aa).

2 disordered regions span residues 1-51 (MDAH…RPGL) and 149-171 (KTAANGSPGGNDSPGGSDRKRVR). One can recognise a PAZ domain in the interval 281 to 396 (PVIDFLLANQ…FPIELCSLIP (116 aa)). Positions 565–872 (FLLCLLPERK…AAAQVGTFLK (308 aa)) constitute a Piwi domain.

Belongs to the argonaute family. Ago subfamily.

Its function is as follows. Probably involved in the RNA silencing pathway. May bind to short RNAs such as microRNAs (miRNAs) or short interfering RNAs (siRNAs), and represses the translation of mRNAs which are complementary to them. This chain is Protein argonaute 4B (AGO4B), found in Oryza sativa subsp. japonica (Rice).